The primary structure comprises 103 residues: Toluene-4-monooxygenase system, effector component (103 aa).

It belongs to the TmoD/XamoD family. In terms of assembly, the alkene monooxygenase multicomponent enzyme system is composed of an electron transfer component and a monooxygenase component interacting with the effector protein TmoD. The electron transfer component is composed of a ferredoxin reductase (TmoF) and a ferredoxin (TmoC), and the monooxygenase component is formed by a heterohexamer (dimer of heterotrimers) of two alpha subunits (TmoA), two beta subunits (TmoE) and two gamma subunits (TmoB).

It participates in xenobiotic degradation; toluene degradation. Functionally, effector component of the toluene-4-monooxygenase multicomponent enzyme system which catalyzes the O2- and NADH-dependent hydroxylation of toluene to form p-cresol. Required for optimal efficiency and specificity of the holoenzyme. In Ectopseudomonas mendocina (Pseudomonas mendocina), this protein is Toluene-4-monooxygenase system, effector component.